Here is a 673-residue protein sequence, read N- to C-terminus: DNA ligase (673 aa).

NAD(+) contacts are provided by residues 33 to 37 (DSVYD), 82 to 83 (SL), and glutamate 117. Lysine 119 acts as the N6-AMP-lysine intermediate in catalysis. 4 residues coordinate NAD(+): arginine 140, glutamate 177, lysine 295, and lysine 319. Residues cysteine 413, cysteine 416, cysteine 431, and cysteine 436 each contribute to the Zn(2+) site. In terms of domain architecture, BRCT spans 595-673 (AVSQVLAGKK…EAELLALDPK (79 aa)).

This sequence belongs to the NAD-dependent DNA ligase family. LigA subfamily. It depends on Mg(2+) as a cofactor. Mn(2+) is required as a cofactor.

The catalysed reaction is NAD(+) + (deoxyribonucleotide)n-3'-hydroxyl + 5'-phospho-(deoxyribonucleotide)m = (deoxyribonucleotide)n+m + AMP + beta-nicotinamide D-nucleotide.. Functionally, DNA ligase that catalyzes the formation of phosphodiester linkages between 5'-phosphoryl and 3'-hydroxyl groups in double-stranded DNA using NAD as a coenzyme and as the energy source for the reaction. It is essential for DNA replication and repair of damaged DNA. The sequence is that of DNA ligase from Synechococcus sp. (strain JA-3-3Ab) (Cyanobacteria bacterium Yellowstone A-Prime).